The primary structure comprises 396 residues: 1-deoxy-D-xylulose 5-phosphate reductoisomerase (396 aa).

Positions 13, 14, 15, 16, and 127 each coordinate NADPH. Residue Lys-128 coordinates 1-deoxy-D-xylulose 5-phosphate. Glu-129 contributes to the NADPH binding site. Asp-153 is a Mn(2+) binding site. 1-deoxy-D-xylulose 5-phosphate is bound by residues Ser-154, Glu-155, Ser-184, and His-207. Glu-155 lines the Mn(2+) pocket. Gly-213 provides a ligand contact to NADPH. 1-deoxy-D-xylulose 5-phosphate contacts are provided by Ser-220, Asn-225, Lys-226, and Glu-229. Mn(2+) is bound at residue Glu-229.

Belongs to the DXR family. The cofactor is Mg(2+). Requires Mn(2+) as cofactor.

The catalysed reaction is 2-C-methyl-D-erythritol 4-phosphate + NADP(+) = 1-deoxy-D-xylulose 5-phosphate + NADPH + H(+). It functions in the pathway isoprenoid biosynthesis; isopentenyl diphosphate biosynthesis via DXP pathway; isopentenyl diphosphate from 1-deoxy-D-xylulose 5-phosphate: step 1/6. Functionally, catalyzes the NADPH-dependent rearrangement and reduction of 1-deoxy-D-xylulose-5-phosphate (DXP) to 2-C-methyl-D-erythritol 4-phosphate (MEP). In Pseudomonas fluorescens (strain SBW25), this protein is 1-deoxy-D-xylulose 5-phosphate reductoisomerase.